The following is a 132-amino-acid chain: MYTDPIADYLTRVRNAAKANHKVVEIPASNMKKEITKILFDQGYILSYKFEDNAVQGSIKIALKYDKVTKESVIRDIQRISKPGLRKYSGSSTIPRILNGLGIAIVSTSKGLMTGKLAKQLNVGGEVICYVY.

The protein belongs to the universal ribosomal protein uS8 family. Part of the 30S ribosomal subunit. Contacts proteins S5 and S12.

Functionally, one of the primary rRNA binding proteins, it binds directly to 16S rRNA central domain where it helps coordinate assembly of the platform of the 30S subunit. This Flavobacterium psychrophilum (strain ATCC 49511 / DSM 21280 / CIP 103535 / JIP02/86) protein is Small ribosomal subunit protein uS8.